A 1057-amino-acid chain; its full sequence is MLCWGNASFGQLGLGGIDEEIVLEPRKSDFFINKRVRDVGCGLRHTVFVLDDGTVYTCGCNDLGQLGHEKSRKKPEQVVALDAQNIVAVSCGEAHTLALNDKGQVYAWGLDSDGQLGLVGSEECIRVPRNIKSLSDIQIVQVACGYYHSLALSKASEVFCWGQNKYGQLGLGTDCKKQTSPQLLKSLLGIPFMQVAAGGAHSFVLTLSGAIFGWGRNKFGQLGLNDENDRYVPNLLKSLRSQKIVYICCGEDHTAALTKEGGVFTFGAGGYGQLGHNSTSHEINPRKVFELMGSIVTEIACGRQHTSAFVPSSGRIYSFGLGGNGQLGTGSTSNRKSPFTVKGNWYPYNGQCLPDIDSEEYFCVKRIFSGGDQSFSHYSSPQNCGPPDDFRCPNPTKQIWTVNEALIQKWLSYPSGRFPVEIANEIDGTFSSSGCLNGSFLAVSNDDHYRTGTRFSGVDMNAARLLFHKLIQPDHPQISQQVAASLEKNLIPKLTSSLPDVEALRFYLTLPECPLMSDSNNFTTIAIPFGTALVNLEKAPLKVLENWWSVLEPPLFLKIVELFKEVVVHLLKLYKIGIPPSERRIFNSFLHTALKVLEILHRVNEKMGQIIQYDKFYIHEVQELIDIRNDYINWVQQQAYGMDVNHGLTELADIPVTICTYPFVFDAQAKTTLLQTDAVLQMQMAIDQAHRQNVSSLFLPVIESVNPCLILVVRRENIVGDAMEVLRKTKNIDYKKPLKVIFVGEDAVDAGGVRKEFFLLIMRELLDPKYGMFRYYEDSRLIWFSDKTFEDSDLFHLIGVICGLAIYNCTIVDLHFPLALYKKLLKKKPSLDDLKELMPDVGRSMQQLLDYPEDDIEETFCLNFTITVENFGATEVKELVLNGADTAVNKQNRQEFVDAYVDYIFNKSVASLFDAFHAGFHKVCGGKVLLLFQPNELQAMVIGNTNYDWKELEKNTEYKGEYWAEHPTIKIFWEVFHELPLEKKKQFLLFLTGSDRIPILGMKSLKLVIQSTGGGEEYLPVSHTCFNLLDLPKYTEKETLRSKLIQAIDHNEGFSLI.

7 RCC1 repeats span residues 1–51, 52–101, 102–154, 156–207, 208–259, 261–311, and 313–368; these read MLCW…FVLD, DGTV…ALND, KGQV…ALSK, SEVF…VLTL, SGAI…ALTK, GGVF…AFVP, and SGRI…KRIF. Residues 730-1057 form the HECT domain; it reads KNIDYKKPLK…IDHNEGFSLI (328 aa). The Glycyl thioester intermediate role is filled by C1025.

As to expression, expressed in brain and testis and detected in heart and placenta.

It is found in the cytoplasm. Its subcellular location is the cytosol. The catalysed reaction is S-ubiquitinyl-[E2 ubiquitin-conjugating enzyme]-L-cysteine + [acceptor protein]-L-lysine = [E2 ubiquitin-conjugating enzyme]-L-cysteine + N(6)-ubiquitinyl-[acceptor protein]-L-lysine.. The protein operates within protein modification; protein ubiquitination. Its function is as follows. Probable E3 ubiquitin-protein ligase involved in either protein trafficking or in the distribution of cellular structures. Required for spermatozoon maturation and fertility, and for the removal of the cytoplasmic droplet of the spermatozoon. E3 ubiquitin-protein ligases accept ubiquitin from an E2 ubiquitin-conjugating enzyme in the form of a thioester and then directly transfer it to targeted substrates. This is Probable E3 ubiquitin-protein ligase HERC4 (HERC4) from Homo sapiens (Human).